A 124-amino-acid polypeptide reads, in one-letter code: Hemoglobin subunit alpha (124 aa).

Residues 1-124 enclose the Globin domain; it reads PLSAADKTII…VAKALSSHYR (124 aa). Histidine 57 lines the O2 pocket. Histidine 79 serves as a coordination point for heme b.

The protein belongs to the globin family. In terms of assembly, hb 1 is a heterotetramer of two alpha and two beta-1 chains. Hb 2 is a heterotetramer of two alpha and two beta-2 chains. Hb 3 is a heterotetramer of two alpha and two beta-3 chains. In terms of tissue distribution, red blood cells (at protein level).

Involved in oxygen transport from gills to the various peripheral tissues. The protein is Hemoglobin subunit alpha of Somniosus microcephalus (Greenland sleeper shark).